We begin with the raw amino-acid sequence, 173 residues long: Translation initiation factor IF-3 (173 aa).

The protein belongs to the IF-3 family. As to quaternary structure, monomer.

It is found in the cytoplasm. Functionally, IF-3 binds to the 30S ribosomal subunit and shifts the equilibrium between 70S ribosomes and their 50S and 30S subunits in favor of the free subunits, thus enhancing the availability of 30S subunits on which protein synthesis initiation begins. This Ehrlichia ruminantium (strain Gardel) protein is Translation initiation factor IF-3.